We begin with the raw amino-acid sequence, 262 residues long: uncharacterized protein (262 aa).

3 consecutive transmembrane segments (helical) span residues 4–24 (LIVFLSMLSSSVAGFFGRFLG), 28–48 (VSRFNLIIFLILLVFSICLFR), and 62–82 (CYLALVCQISLFLVLLRSHIL). Residues 152–181 (EREARAQEHDRISAEVETITSACENLEAAM) are a coiled coil.

It is found in the mitochondrion membrane. This is an uncharacterized protein from Arabidopsis thaliana (Mouse-ear cress).